Consider the following 320-residue polypeptide: Ciliary microtubule inner protein 2A (320 aa).

The protein belongs to the CIMIP2 family. As to quaternary structure, microtubule inner protein component of sperm flagellar doublet microtubules. As to expression, expressed in sperm.

The protein localises to the cytoplasm. Its subcellular location is the cytoskeleton. It is found in the flagellum axoneme. Microtubule inner protein (MIP) part of the dynein-decorated doublet microtubules (DMTs) in flagellum axoneme. Binds to the intra-tubulin interfaces. This is Ciliary microtubule inner protein 2A (CIMIP2A) from Bos taurus (Bovine).